The sequence spans 144 residues: Large ribosomal subunit protein uL13 (144 aa).

This sequence belongs to the universal ribosomal protein uL13 family. As to quaternary structure, part of the 50S ribosomal subunit.

This protein is one of the early assembly proteins of the 50S ribosomal subunit, although it is not seen to bind rRNA by itself. It is important during the early stages of 50S assembly. This Moorella thermoacetica (strain ATCC 39073 / JCM 9320) protein is Large ribosomal subunit protein uL13.